Reading from the N-terminus, the 628-residue chain is Chaperone protein HtpG (628 aa).

The interval 1–339 (MSNNQQTLGF…SNDLPLNVSR (339 aa)) is a; substrate-binding. A b region spans residues 340 to 556 (EILQDNKTTA…NDQMTTQMAK (217 aa)). The interval 557–628 (LFAMSGQPVP…IKRVNTLLAG (72 aa)) is c.

The protein belongs to the heat shock protein 90 family. As to quaternary structure, homodimer.

The protein resides in the cytoplasm. In terms of biological role, molecular chaperone. Has ATPase activity. In Actinobacillus succinogenes (strain ATCC 55618 / DSM 22257 / CCUG 43843 / 130Z), this protein is Chaperone protein HtpG.